The sequence spans 780 residues: WD repeat-containing protein 27 (780 aa).

WD repeat units lie at residues 3–56, 61–100, 111–150, 154–193, 200–236, 291–335, 342–385, 500–540, 544–582, 588–639, 644–685, 691–738, and 752–779; these read TPPE…VWSS, HQLLTLQGHHQLITAVVFGNQIDPLLLCSASEDYIIMWNV, LTPRGTILGSLLQTVLCLRFSLDDRAIAVCAGNKISVMDV, SVLVELKGHQGSVTAVEFCPWQAHTLISVSEDRSFKVWDF, YSSSILTAYPLLNLLINEENQQLVTGSADGQLWIFSL, FPIL…LASF, HFKE…VLEI, NLSR…VFNA, GPPAAFSGHDGAVSTICWSHDKRWLLSTGRDRTLRVWSV, MLLL…RYKP, KPIF…VFDL, AAVL…LWDL, and AFCTVLQDTQIRLLKWPSTQQLLSLSQP.

This chain is WD repeat-containing protein 27 (Wdr27), found in Mus musculus (Mouse).